The primary structure comprises 340 residues: Probable serine acetyltransferase 5 (340 aa).

Composition is skewed to low complexity over residues 1-17 and 54-64; these read MLVV…RVAA and PAEVVPAFAPP. The disordered stretch occupies residues 1 to 67; sequence MLVVVARKSS…VPAFAPPESE (67 aa).

This sequence belongs to the transferase hexapeptide repeat family. In terms of assembly, homomultimer.

It catalyses the reaction L-serine + acetyl-CoA = O-acetyl-L-serine + CoA. Its pathway is amino-acid biosynthesis; L-cysteine biosynthesis; L-cysteine from L-serine: step 1/2. The sequence is that of Probable serine acetyltransferase 5 (SAT5) from Oryza sativa subsp. japonica (Rice).